A 297-amino-acid chain; its full sequence is Bifunctional protein FolD (297 aa).

NADP(+)-binding positions include 166–168, Ser-191, and Ile-232; that span reads GRS.

Belongs to the tetrahydrofolate dehydrogenase/cyclohydrolase family. As to quaternary structure, homodimer.

It catalyses the reaction (6R)-5,10-methylene-5,6,7,8-tetrahydrofolate + NADP(+) = (6R)-5,10-methenyltetrahydrofolate + NADPH. The enzyme catalyses (6R)-5,10-methenyltetrahydrofolate + H2O = (6R)-10-formyltetrahydrofolate + H(+). The protein operates within one-carbon metabolism; tetrahydrofolate interconversion. In terms of biological role, catalyzes the oxidation of 5,10-methylenetetrahydrofolate to 5,10-methenyltetrahydrofolate and then the hydrolysis of 5,10-methenyltetrahydrofolate to 10-formyltetrahydrofolate. This Phenylobacterium zucineum (strain HLK1) protein is Bifunctional protein FolD.